The primary structure comprises 332 residues: UPF0194 membrane protein YbhG (332 aa).

Positions 1 to 16 are cleaved as a signal peptide; sequence MMKKTVVIGLAVVVLA. A coiled-coil region spans residues 108–209; that stretch reads EEIAQAAAAV…LNLQDSTLIA (102 aa).

It belongs to the UPF0194 family.

Its subcellular location is the periplasm. The sequence is that of UPF0194 membrane protein YbhG from Shigella dysenteriae serotype 1 (strain Sd197).